Consider the following 500-residue polypeptide: Guanosine-5'-triphosphate,3'-diphosphate pyrophosphatase (500 aa).

This sequence belongs to the GppA/Ppx family. GppA subfamily.

It catalyses the reaction guanosine 3'-diphosphate 5'-triphosphate + H2O = guanosine 3',5'-bis(diphosphate) + phosphate + H(+). Its pathway is purine metabolism; ppGpp biosynthesis; ppGpp from GTP: step 2/2. Its function is as follows. Catalyzes the conversion of pppGpp to ppGpp. Guanosine pentaphosphate (pppGpp) is a cytoplasmic signaling molecule which together with ppGpp controls the 'stringent response', an adaptive process that allows bacteria to respond to amino acid starvation, resulting in the coordinated regulation of numerous cellular activities. This Photorhabdus laumondii subsp. laumondii (strain DSM 15139 / CIP 105565 / TT01) (Photorhabdus luminescens subsp. laumondii) protein is Guanosine-5'-triphosphate,3'-diphosphate pyrophosphatase.